The primary structure comprises 787 residues: DNA ligase (787 aa).

NAD(+) contacts are provided by residues Asp-32–Asp-36, Ser-81–Leu-82, and Glu-121. Residue Lys-123 is the N6-AMP-lysine intermediate of the active site. Residues Arg-144, Glu-181, Lys-297, and Lys-321 each contribute to the NAD(+) site. Positions 415, 418, 445, and 451 each coordinate Zn(2+). The BRCT domain occupies Val-703 to Asp-787.

It belongs to the NAD-dependent DNA ligase family. LigA subfamily. It depends on Mg(2+) as a cofactor. Mn(2+) is required as a cofactor.

The catalysed reaction is NAD(+) + (deoxyribonucleotide)n-3'-hydroxyl + 5'-phospho-(deoxyribonucleotide)m = (deoxyribonucleotide)n+m + AMP + beta-nicotinamide D-nucleotide.. In terms of biological role, DNA ligase that catalyzes the formation of phosphodiester linkages between 5'-phosphoryl and 3'-hydroxyl groups in double-stranded DNA using NAD as a coenzyme and as the energy source for the reaction. It is essential for DNA replication and repair of damaged DNA. The sequence is that of DNA ligase from Pseudomonas syringae pv. tomato (strain ATCC BAA-871 / DC3000).